Reading from the N-terminus, the 167-residue chain is Small ribosomal subunit protein uS5 (167 aa).

One can recognise an S5 DRBM domain in the interval 11 to 74 (LQEKLIAVNR…EKARRNMINV (64 aa)).

The protein belongs to the universal ribosomal protein uS5 family. Part of the 30S ribosomal subunit. Contacts proteins S4 and S8.

In terms of biological role, with S4 and S12 plays an important role in translational accuracy. Located at the back of the 30S subunit body where it stabilizes the conformation of the head with respect to the body. This is Small ribosomal subunit protein uS5 from Shigella dysenteriae serotype 1 (strain Sd197).